The sequence spans 288 residues: 2-dehydro-3-deoxyphosphooctonate aldolase (288 aa).

It belongs to the KdsA family.

The protein resides in the cytoplasm. The enzyme catalyses D-arabinose 5-phosphate + phosphoenolpyruvate + H2O = 3-deoxy-alpha-D-manno-2-octulosonate-8-phosphate + phosphate. The protein operates within carbohydrate biosynthesis; 3-deoxy-D-manno-octulosonate biosynthesis; 3-deoxy-D-manno-octulosonate from D-ribulose 5-phosphate: step 2/3. Its pathway is bacterial outer membrane biogenesis; lipopolysaccharide biosynthesis. The protein is 2-dehydro-3-deoxyphosphooctonate aldolase of Bdellovibrio bacteriovorus (strain ATCC 15356 / DSM 50701 / NCIMB 9529 / HD100).